The primary structure comprises 558 residues: Membrane protein insertase YidC (558 aa).

The next 5 helical transmembrane spans lie at 6–26, 359–379, 434–454, 480–500, and 513–533; these read SFFI…WDDE, FIHT…TVII, LGGC…YYML, ILPI…PTTI, and LVIF…YYII.

Belongs to the OXA1/ALB3/YidC family. Type 1 subfamily. In terms of assembly, interacts with the Sec translocase complex via SecD. Specifically interacts with transmembrane segments of nascent integral membrane proteins during membrane integration.

It is found in the cell inner membrane. In terms of biological role, required for the insertion and/or proper folding and/or complex formation of integral membrane proteins into the membrane. Involved in integration of membrane proteins that insert both dependently and independently of the Sec translocase complex, as well as at least some lipoproteins. Aids folding of multispanning membrane proteins. The chain is Membrane protein insertase YidC from Blochmanniella floridana.